The chain runs to 126 residues: Large ribosomal subunit protein bL12 (126 aa).

The protein belongs to the bacterial ribosomal protein bL12 family. In terms of assembly, homodimer. Part of the ribosomal stalk of the 50S ribosomal subunit. Forms a multimeric L10(L12)X complex, where L10 forms an elongated spine to which 2 to 4 L12 dimers bind in a sequential fashion. Binds GTP-bound translation factors.

In terms of biological role, forms part of the ribosomal stalk which helps the ribosome interact with GTP-bound translation factors. Is thus essential for accurate translation. This is Large ribosomal subunit protein bL12 from Methylobacterium nodulans (strain LMG 21967 / CNCM I-2342 / ORS 2060).